Reading from the N-terminus, the 239-residue chain is MAAISAKDVKELRDKTGAGMMDCKKALQENDGDQEKAIAYLRKKGLSQAGKKSGRVTAEGLVDSYIHFGGQIGVLVEVNCETDFVARNEAFKELVQDIAKQIAACPNVQYVDTDEIPQDFVEKEKAVAMGSDALKGKPDNIKEKIVQGKLDKTLKELCLLHQPYIKDQSITVQELLQQAISKLGENMKVRRFTRFVLGEGIDKVESNLAEEVAAQTKPKAEEKPAAKKATSKKKKGKKK.

The tract at residues 82 to 85 (TDFV) is involved in Mg(2+) ion dislocation from EF-Tu. The disordered stretch occupies residues 213 to 239 (AAQTKPKAEEKPAAKKATSKKKKGKKK). The segment covering 229-239 (ATSKKKKGKKK) has biased composition (basic residues).

It belongs to the EF-Ts family.

The protein localises to the cytoplasm. Associates with the EF-Tu.GDP complex and induces the exchange of GDP to GTP. It remains bound to the aminoacyl-tRNA.EF-Tu.GTP complex up to the GTP hydrolysis stage on the ribosome. This Acaryochloris marina (strain MBIC 11017) protein is Elongation factor Ts.